A 360-amino-acid chain; its full sequence is Protein pelota homolog (360 aa).

The protein belongs to the eukaryotic release factor 1 family. Pelota subfamily. As to quaternary structure, monomer. Requires a divalent metal cation as cofactor.

The protein resides in the cytoplasm. In terms of biological role, may function in recognizing stalled ribosomes, interact with stem-loop structures in stalled mRNA molecules, and effect endonucleolytic cleavage of the mRNA. May play a role in the release non-functional ribosomes and degradation of damaged mRNAs. Has endoribonuclease activity. This chain is Protein pelota homolog, found in Hyperthermus butylicus (strain DSM 5456 / JCM 9403 / PLM1-5).